A 103-amino-acid polypeptide reads, in one-letter code: Large ribosomal subunit protein bL21 (103 aa).

This sequence belongs to the bacterial ribosomal protein bL21 family. In terms of assembly, part of the 50S ribosomal subunit. Contacts protein L20.

Functionally, this protein binds to 23S rRNA in the presence of protein L20. This is Large ribosomal subunit protein bL21 from Erwinia tasmaniensis (strain DSM 17950 / CFBP 7177 / CIP 109463 / NCPPB 4357 / Et1/99).